A 395-amino-acid polypeptide reads, in one-letter code: GA-binding protein subunit beta-1 (395 aa).

N-acetylserine is present on Ser-2. ANK repeat units follow at residues 5 to 34 (DLGK…PFTT) and 37 to 66 (LGTS…SRDA). An N6-acetyllysine modification is found at Lys-69. ANK repeat units lie at residues 70-99 (VDRT…DVNA), 103-132 (LKMT…DVHT), and 136-166 (FCKT…QINT). Positions 258–327 (DGAIQQVVSS…ETVISEEPPA (70 aa)) are transcription activation and HCFC1 interaction. N6-acetyllysine is present on residues Lys-352 and Lys-381.

As to quaternary structure, heterotetramer of two alpha and two beta subunits. Interacts with HCFC1, causing repression of transcriptional activity. Post-translationally, acetylated by EP300/p300. Deacetylated by SIRT7, promoting heterotetramerization and activity.

The protein resides in the nucleus. Functionally, transcription factor capable of interacting with purine rich repeats (GA repeats). Acts as a master regulator of nuclear-encoded mitochondrial genes. In terms of biological role, (Microbial infection) Necessary for the expression of the Adenovirus E4 gene. The protein is GA-binding protein subunit beta-1 (GABPB1) of Homo sapiens (Human).